Here is a 220-residue protein sequence, read N- to C-terminus: MTQDEMKFTVAQTALKYVIKNTIIGVGTGSTANFFIDALSTIKNNIKGAVASSKATAQRLENHGIRVFDLNKVTAISTYIDGADESDNNLNLIKGGGGALTREKIVAAVAHQFICIADESKLVSIMGSFPLPIEVIPMAANYVKNQISQKIGGIPEVRKDFITDNGNFILDIKDLKITNPKAMETKLNSIIGVVTNGLFANRGANVLLLGTPNGVKIITN.

Substrate is bound by residues 28–31, 81–84, and 94–97; these read TGST, DGAD, and KGGG. Glu-103 functions as the Proton acceptor in the catalytic mechanism. Lys-121 serves as a coordination point for substrate.

This sequence belongs to the ribose 5-phosphate isomerase family. As to quaternary structure, homodimer.

It catalyses the reaction aldehydo-D-ribose 5-phosphate = D-ribulose 5-phosphate. The protein operates within carbohydrate degradation; pentose phosphate pathway; D-ribose 5-phosphate from D-ribulose 5-phosphate (non-oxidative stage): step 1/1. Its function is as follows. Catalyzes the reversible conversion of ribose-5-phosphate to ribulose 5-phosphate. This is Ribose-5-phosphate isomerase A from Vesicomyosocius okutanii subsp. Calyptogena okutanii (strain HA).